We begin with the raw amino-acid sequence, 543 residues long: Periplasmic oligopeptide-binding protein OppA (543 aa).

A signal peptide spans 1-26 (MTNITKRSLVAAGVLAALMAGNVALA). A disulfide bridge links Cys-297 with Cys-443.

The protein belongs to the bacterial solute-binding protein 5 family. In terms of assembly, the complex is composed of two ATP-binding proteins (OppD and OppF), two transmembrane proteins (OppB and OppC) and a solute-binding protein (OppA).

The protein localises to the periplasm. Functionally, part of the ABC transporter complex OppABCDF involved in the uptake of oligopeptides. Plays an important nutritional role. Binds peptides containing from two to five amino acid residues. Displays a preference for tripeptides and tetrapeptides over dipeptides and pentapeptides, for peptides composed of L-amino acids and for positively charged peptides. Cannot bind the cell wall peptide L-Ala-D-Gly-gamma-meso-diaminopimelic acid. The protein is Periplasmic oligopeptide-binding protein OppA of Escherichia coli (strain K12).